The following is a 594-amino-acid chain: Metastasis-associated protein MTA3 (594 aa).

Positions 1–147 (MAANMYRVGD…PSLKTLLADK (147 aa)) constitute a BAH domain. An ELM2 domain is found at 148–259 (GEIRVGPRYQ…SAISVLVPLG (112 aa)). In terms of domain architecture, SANT spans 266-318 (DEMEEWSASEASLFEEALEKYGKDFNDIRQDFLPWKSLTSIIEYYYMWKTTDR). Residues 379–406 (CESCYATQSHQWYSWGPPNMQCRLCAIC) form a GATA-type; atypical zinc finger. Phosphoserine occurs at positions 428 and 430. At T455 the chain carries Phosphothreonine. Phosphoserine is present on S519.

The protein belongs to the metastasis-associated protein family. As to quaternary structure, component of the nucleosome remodeling and deacetylase (NuRD) repressor complex, composed of core proteins MTA1, MTA2, MTA3, RBBP4, RBBP7, HDAC1, HDAC2, MBD2, MBD3, and peripherally associated proteins CDK2AP1, CDK2AP2, GATAD2A, GATAD2B, CHD3, CHD4 and CHD5. The exact stoichiometry of the NuRD complex is unknown, and some subunits such as MBD2 and MBD3, GATAD2A and GATAD2B, and CHD3, CHD4 and CHD5 define mutually exclusive NuRD complexes. Interacts with BCL6. Interacts with NACC2. Interacts with PWWP2B. Expressed in germinal centers of lymphoid tissues. No expression in nonepithelial cells.

It localises to the nucleus. The protein resides in the cytoplasm. In terms of biological role, acts as a component of the histone deacetylase NuRD complex which participates in the remodeling of chromatin. Plays a role in maintenance of the normal epithelial architecture through the repression of SNAI1 transcription in a histone deacetylase-dependent manner, and thus the regulation of E-cadherin levels. Contributes to transcriptional repression by BCL6. This chain is Metastasis-associated protein MTA3 (MTA3), found in Homo sapiens (Human).